The chain runs to 367 residues: Queuine tRNA-ribosyltransferase (367 aa).

The active-site Proton acceptor is Asp-89. Substrate is bound by residues 89–93 (DSGGF), Asp-143, Gln-185, and Gly-212. The segment at 243-249 (GVGTPSD) is RNA binding. Asp-262 acts as the Nucleophile in catalysis. Positions 267–271 (TRNAR) are RNA binding; important for wobble base 34 recognition. Positions 300, 302, 305, and 331 each coordinate Zn(2+).

It belongs to the queuine tRNA-ribosyltransferase family. As to quaternary structure, homodimer. Within each dimer, one monomer is responsible for RNA recognition and catalysis, while the other monomer binds to the replacement base PreQ1. It depends on Zn(2+) as a cofactor.

It catalyses the reaction 7-aminomethyl-7-carbaguanine + guanosine(34) in tRNA = 7-aminomethyl-7-carbaguanosine(34) in tRNA + guanine. Its pathway is tRNA modification; tRNA-queuosine biosynthesis. Functionally, catalyzes the base-exchange of a guanine (G) residue with the queuine precursor 7-aminomethyl-7-deazaguanine (PreQ1) at position 34 (anticodon wobble position) in tRNAs with GU(N) anticodons (tRNA-Asp, -Asn, -His and -Tyr). Catalysis occurs through a double-displacement mechanism. The nucleophile active site attacks the C1' of nucleotide 34 to detach the guanine base from the RNA, forming a covalent enzyme-RNA intermediate. The proton acceptor active site deprotonates the incoming PreQ1, allowing a nucleophilic attack on the C1' of the ribose to form the product. After dissociation, two additional enzymatic reactions on the tRNA convert PreQ1 to queuine (Q), resulting in the hypermodified nucleoside queuosine (7-(((4,5-cis-dihydroxy-2-cyclopenten-1-yl)amino)methyl)-7-deazaguanosine). This Thiobacillus denitrificans (strain ATCC 25259 / T1) protein is Queuine tRNA-ribosyltransferase.